The following is a 396-amino-acid chain: Probable sugar efflux transporter (396 aa).

12 helical membrane passes run 15 to 35 (VVTLAIAAFIFNTTEFVPVGL), 50 to 70 (VGIMLTIYAWVVAVMSLPFML), 81 to 101 (LICLFVLFIASHVLSFLAWNF), 103 to 123 (VLVISRIGIAFAHAIFWSITA), 136 to 156 (AQALSLIATGTALAMVLGLPI), 169 to 189 (TFFAIGMGALITLLCLIKLLP), 209 to 229 (PALMSLYVLTVVVVTAHYTAY), 246 to 266 (FATVLLLILGGAGIIGSLVFG), 275 to 295 (SLVSIAIALLVVCLLLLLPAA), 301 to 321 (LAILSIFWGIAIMVIGLGMQV), 333 to 353 (VAMALFSGIFNIGIGAGALVG), and 364 to 384 (AIGYIGDIPACAALVWAVLIF).

It belongs to the major facilitator superfamily. SotB (TC 2.A.1.2) family.

It localises to the cell inner membrane. In terms of biological role, involved in the efflux of sugars. The physiological role may be the reduction of the intracellular concentration of toxic sugars or sugar metabolites. This is Probable sugar efflux transporter from Salmonella paratyphi C (strain RKS4594).